Reading from the N-terminus, the 87-residue chain is UPF0237 protein YjhC (87 aa).

Residues 4-76 (VVTVVGADKI…EALGVNIHVQ (73 aa)) enclose the ACT domain.

This sequence belongs to the UPF0237 family.

This Lactococcus lactis subsp. lactis (strain IL1403) (Streptococcus lactis) protein is UPF0237 protein YjhC (yjhC).